The sequence spans 555 residues: (+)-delta-cadinene synthase isozyme A (555 aa).

Residues 1 to 22 form a disordered region; sequence MASQASQVLASPHPAISSENRP. 4 residues coordinate Mg(2+): aspartate 308, aspartate 312, aspartate 452, and glutamate 456. The DDXXD motif motif lies at 308-312; that stretch reads DDTYD.

Belongs to the terpene synthase family. It depends on Mg(2+) as a cofactor.

The catalysed reaction is (2E,6E)-farnesyl diphosphate = (1S,8aR)-delta-cadinene + diphosphate. It participates in secondary metabolite biosynthesis; terpenoid biosynthesis. Its function is as follows. Responsible for the cyclization of trans,trans-farnesyl diphosphate (FPP) to (+)-delta cadinene. This Gossypium arboreum (Tree cotton) protein is (+)-delta-cadinene synthase isozyme A (CAD1-A).